Here is a 183-residue protein sequence, read N- to C-terminus: Probable actin-related protein 2/3 complex subunit 3 (183 aa).

The protein belongs to the ARPC3 family. In terms of assembly, component of the Arp2/3 complex.

It localises to the cytoplasm. The protein localises to the cytoskeleton. Functions as a component of the Arp2/3 complex which is involved in regulation of actin polymerization and together with an activating nucleation-promoting factor (NPF) mediates the formation of branched actin networks. The sequence is that of Probable actin-related protein 2/3 complex subunit 3 (arx-5) from Caenorhabditis elegans.